Here is a 414-residue protein sequence, read N- to C-terminus: NADH-quinone oxidoreductase subunit D (414 aa).

Belongs to the complex I 49 kDa subunit family. NDH-1 is composed of 14 different subunits. Subunits NuoB, C, D, E, F, and G constitute the peripheral sector of the complex.

It is found in the cell inner membrane. The catalysed reaction is a quinone + NADH + 5 H(+)(in) = a quinol + NAD(+) + 4 H(+)(out). In terms of biological role, NDH-1 shuttles electrons from NADH, via FMN and iron-sulfur (Fe-S) centers, to quinones in the respiratory chain. The immediate electron acceptor for the enzyme in this species is believed to be ubiquinone. Couples the redox reaction to proton translocation (for every two electrons transferred, four hydrogen ions are translocated across the cytoplasmic membrane), and thus conserves the redox energy in a proton gradient. The chain is NADH-quinone oxidoreductase subunit D from Akkermansia muciniphila (strain ATCC BAA-835 / DSM 22959 / JCM 33894 / BCRC 81048 / CCUG 64013 / CIP 107961 / Muc).